A 968-amino-acid chain; its full sequence is RNA polymerase-associated protein RapA (968 aa).

The 170-residue stretch at 163 to 332 folds into the Helicase ATP-binding domain; that stretch reads EVGRRYAPRV…FARLRLLDPD (170 aa). 176–183 provides a ligand contact to ATP; it reads DEVGLGKT. Positions 278-281 match the DEAH box motif; sequence DEAH. The 165-residue stretch at 491-655 folds into the Helicase C-terminal domain; that stretch reads RVDWLIEFLK…EFAEDLLNVL (165 aa).

It belongs to the SNF2/RAD54 helicase family. RapA subfamily. As to quaternary structure, interacts with the RNAP. Has a higher affinity for the core RNAP than for the holoenzyme. Its ATPase activity is stimulated by binding to RNAP.

In terms of biological role, transcription regulator that activates transcription by stimulating RNA polymerase (RNAP) recycling in case of stress conditions such as supercoiled DNA or high salt concentrations. Probably acts by releasing the RNAP, when it is trapped or immobilized on tightly supercoiled DNA. Does not activate transcription on linear DNA. Probably not involved in DNA repair. This Shewanella baltica (strain OS155 / ATCC BAA-1091) protein is RNA polymerase-associated protein RapA.